Here is a 233-residue protein sequence, read N- to C-terminus: Orotidine 5'-phosphate decarboxylase (233 aa).

Substrate-binding positions include aspartate 13, lysine 35, 62 to 71 (DLKFHDIPNT), threonine 122, arginine 182, glutamine 191, glycine 211, and arginine 212. Catalysis depends on lysine 64, which acts as the Proton donor.

Belongs to the OMP decarboxylase family. Type 1 subfamily. As to quaternary structure, homodimer.

It catalyses the reaction orotidine 5'-phosphate + H(+) = UMP + CO2. The protein operates within pyrimidine metabolism; UMP biosynthesis via de novo pathway; UMP from orotate: step 2/2. Functionally, catalyzes the decarboxylation of orotidine 5'-monophosphate (OMP) to uridine 5'-monophosphate (UMP). This chain is Orotidine 5'-phosphate decarboxylase, found in Pseudomonas fluorescens (strain ATCC BAA-477 / NRRL B-23932 / Pf-5).